The sequence spans 468 residues: MAVSVDQTLAGKYPAKLHAKRVAARIQELGHGDSGIIYLEGQKTHMIEDSDGEMPFRQRRNFFYLSGCPLPDSYLTYDIKADKLTIFIPPIDPASVIWSGLPLSVEEALEIYDVDAVLSTAEVNASLAHYCSAQGGKKVFAIADQVSPHITFLPFQEIDFDVLKRAAEESRVVKDSYEIALLRRANEISSKAHVAVFKAAMSARNERELEAIFVGACMSSGCREQSYHPIFASGTNAATLHYQKNDEDLVDSVTGQRRLNMLIDAGAEYRNYCADITRVVPLSGKFSPESRQIYDIVLEMQNSSLAMIKAGVMWEDVHSTSHRVAIRGLLKLGILRGTEEELFEKGISVAFFPHGLGHYLGMDTHDTGGNPNYADKDPKFKYLRLRGPLASGGVVTVEPGIYFCRFIIDPYLSSPDLGKYINADVLGRYWSVGGVRIEDNVVVTDNGYDNLTTAPKLPEEIEKLATEK.

The Mn(2+) site is built by aspartate 264, aspartate 275, glutamate 398, and glutamate 438.

It belongs to the peptidase M24B family. It depends on Mn(2+) as a cofactor.

It catalyses the reaction Release of any N-terminal amino acid, including proline, that is linked to proline, even from a dipeptide or tripeptide.. Catalyzes the removal of a penultimate prolyl residue from the N-termini of peptides. The chain is Probable Xaa-Pro aminopeptidase PEPP (PEPP) from Paracoccidioides lutzii (strain ATCC MYA-826 / Pb01) (Paracoccidioides brasiliensis).